A 76-amino-acid polypeptide reads, in one-letter code: Adropin (76 aa).

The first 33 residues, 1–33 (MGAAISQGALIAIVCNGLVGFLLLLLWVILCWA), serve as a signal peptide directing secretion. The tract at residues 41-76 (VDSLSESSPNSSPGPCPEKAPPPQKPSHEGSYLLQP) is disordered. Over residues 52-65 (SPGPCPEKAPPPQK) the composition is skewed to pro residues.

In terms of tissue distribution, expressed in liver and brain.

It localises to the secreted. Involved in the regulation of glucose homeostasis and lipid metabolism. The protein is Adropin (ENHO) of Homo sapiens (Human).